The sequence spans 579 residues: CTP synthase (579 aa).

The segment at 1 to 281 (MPALRKHPQT…DAYVVRRLNL (281 aa)) is amidoligase domain. Serine 23 serves as a coordination point for CTP. Serine 23 lines the UTP pocket. ATP-binding positions include 24–29 (SLGKGL) and aspartate 81. Residues aspartate 81 and glutamate 155 each contribute to the Mg(2+) site. CTP-binding positions include 162–164 (DIE), 202–207 (KTKPTQ), and lysine 238. UTP is bound by residues 202 to 207 (KTKPTQ) and lysine 238. A Glutamine amidotransferase type-1 domain is found at 306 to 554 (RIALVGKYID…IGAALDYKAA (249 aa)). An L-glutamine-binding site is contributed by glycine 369. The active-site Nucleophile; for glutamine hydrolysis is cysteine 396. L-glutamine contacts are provided by residues 397–400 (LGLQ), glutamate 419, and arginine 480. Catalysis depends on residues histidine 527 and glutamate 529.

It belongs to the CTP synthase family. As to quaternary structure, homotetramer.

It carries out the reaction UTP + L-glutamine + ATP + H2O = CTP + L-glutamate + ADP + phosphate + 2 H(+). The catalysed reaction is L-glutamine + H2O = L-glutamate + NH4(+). It catalyses the reaction UTP + NH4(+) + ATP = CTP + ADP + phosphate + 2 H(+). It functions in the pathway pyrimidine metabolism; CTP biosynthesis via de novo pathway; CTP from UDP: step 2/2. With respect to regulation, allosterically activated by GTP, when glutamine is the substrate; GTP has no effect on the reaction when ammonia is the substrate. The allosteric effector GTP functions by stabilizing the protein conformation that binds the tetrahedral intermediate(s) formed during glutamine hydrolysis. Inhibited by the product CTP, via allosteric rather than competitive inhibition. Functionally, catalyzes the ATP-dependent amination of UTP to CTP with either L-glutamine or ammonia as the source of nitrogen. Regulates intracellular CTP levels through interactions with the four ribonucleotide triphosphates. This is CTP synthase from Mycobacterium sp. (strain JLS).